We begin with the raw amino-acid sequence, 458 residues long: tRNA modification GTPase MnmE (458 aa).

(6S)-5-formyl-5,6,7,8-tetrahydrofolate contacts are provided by Arg22, Glu84, and Arg123. Residues 220-379 (GISTAIIGRP…LEKAIADLFF (160 aa)) enclose the TrmE-type G domain. Asn230 serves as a coordination point for K(+). GTP is bound by residues 230-235 (NVGKSS), 249-255 (TDIAGTT), and 274-277 (DTAG). Ser234 is a Mg(2+) binding site. K(+)-binding residues include Thr249, Ile251, and Thr254. Mg(2+) is bound at residue Thr255. Lys458 is a binding site for (6S)-5-formyl-5,6,7,8-tetrahydrofolate.

This sequence belongs to the TRAFAC class TrmE-Era-EngA-EngB-Septin-like GTPase superfamily. TrmE GTPase family. As to quaternary structure, homodimer. Heterotetramer of two MnmE and two MnmG subunits. K(+) is required as a cofactor.

It localises to the cytoplasm. Functionally, exhibits a very high intrinsic GTPase hydrolysis rate. Involved in the addition of a carboxymethylaminomethyl (cmnm) group at the wobble position (U34) of certain tRNAs, forming tRNA-cmnm(5)s(2)U34. The protein is tRNA modification GTPase MnmE of Bacillus mycoides (strain KBAB4) (Bacillus weihenstephanensis).